The chain runs to 246 residues: MWIGVISLFPEMFKAITEFGVTGRAVKHNLLKVECWNPRNFTFDKHKTVDDRPYGGGPGMLMMVQPLRDAIHTAKAAAGEGAKVIYLSPQGRKLDQGGVTELAQNQKLILVCGRYEGIDERLIQTEIDEEWSIGDYVLTGGELPAMTLIDAVARFIPGVLGKQASAEEDSFADGLLDCPHYTRPEVLEGLTVPPVLMSGHHEEIRKWRLKQSLQRTWLRRPELLEGLALTDEQRKLLKEAQAEHNS.

S-adenosyl-L-methionine is bound by residues G113 and 133 to 138 (IGDYVL).

It belongs to the RNA methyltransferase TrmD family. In terms of assembly, homodimer.

It localises to the cytoplasm. It carries out the reaction guanosine(37) in tRNA + S-adenosyl-L-methionine = N(1)-methylguanosine(37) in tRNA + S-adenosyl-L-homocysteine + H(+). Functionally, specifically methylates guanosine-37 in various tRNAs. In Haemophilus influenzae (strain PittEE), this protein is tRNA (guanine-N(1)-)-methyltransferase.